Reading from the N-terminus, the 440-residue chain is Chromosome partition protein MukF (440 aa).

The tract at residues 208–236 (LSETSGTLRELQDTLEAAGDKLQANLLRI) is leucine-zipper.

The protein belongs to the MukF family. Interacts, and probably forms a ternary complex, with MukE and MukB via its C-terminal region. The complex formation is stimulated by calcium or magnesium. It is required for an interaction between MukE and MukB.

The protein resides in the cytoplasm. It localises to the nucleoid. In terms of biological role, involved in chromosome condensation, segregation and cell cycle progression. May participate in facilitating chromosome segregation by condensation DNA from both sides of a centrally located replisome during cell division. Not required for mini-F plasmid partitioning. Probably acts via its interaction with MukB and MukE. Overexpression results in anucleate cells. It has a calcium binding activity. The polypeptide is Chromosome partition protein MukF (Salmonella typhi).